The sequence spans 65 residues: Antimicrobial peptide 1 (65 aa).

The N-terminal stretch at 1–27 is a signal peptide; it reads MAKVSSAYLKFALVMILLLSVISAVMS. Intrachain disulfides connect Cys30-Cys47, Cys37-Cys51, and Cys46-Cys62.

Belongs to the AMP family. As to expression, seed specific.

It is found in the secreted. Its function is as follows. Possesses antifungal activity. The chain is Antimicrobial peptide 1 from Phytolacca americana (American pokeweed).